The chain runs to 611 residues: Urease subunit alpha 2 (611 aa).

The 458-residue stretch at G154 to F611 folds into the Urease domain. Residues H159, H161, and K242 each coordinate Ni(2+). An N6-carboxylysine modification is found at K242. H244 serves as a coordination point for substrate. Ni(2+)-binding residues include H271 and H297. The active-site Proton donor is the H345. D385 provides a ligand contact to Ni(2+). Residues G411–D434 form a disordered region. The span at S418 to D434 shows a compositional bias: polar residues.

This sequence belongs to the metallo-dependent hydrolases superfamily. Urease alpha subunit family. As to quaternary structure, heterotrimer of UreA (gamma), UreB (beta) and UreC (alpha) subunits. Three heterotrimers associate to form the active enzyme. The cofactor is Ni cation. Post-translationally, carboxylation allows a single lysine to coordinate two nickel ions.

The protein resides in the cytoplasm. The catalysed reaction is urea + 2 H2O + H(+) = hydrogencarbonate + 2 NH4(+). It functions in the pathway nitrogen metabolism; urea degradation; CO(2) and NH(3) from urea (urease route): step 1/1. This Psychrobacter cryohalolentis (strain ATCC BAA-1226 / DSM 17306 / VKM B-2378 / K5) protein is Urease subunit alpha 2.